The chain runs to 283 residues: Endochitinase At2g43620 (283 aa).

Residues 1 to 28 (MATLRAMLKNAFILFLFTLTIMAKTVFS) form the signal peptide. The Chitin-binding type-1 domain occupies 29-66 (QQCGTTGCAANLCCSRYGYCGTTDAYCGTGCRSGPCSS). Cystine bridges form between C31-C42, C36-C48, C41-C55, and C59-C64. A catalytic region spans residues 88-283 (DTIENVVTPA…GITPGANLSC (196 aa)). E150 serves as the catalytic Proton donor. N280 carries N-linked (GlcNAc...) asparagine glycosylation.

The protein belongs to the glycosyl hydrolase 19 family. Chitinase class I subfamily.

It carries out the reaction Random endo-hydrolysis of N-acetyl-beta-D-glucosaminide (1-&gt;4)-beta-linkages in chitin and chitodextrins.. The polypeptide is Endochitinase At2g43620 (Arabidopsis thaliana (Mouse-ear cress)).